A 461-amino-acid polypeptide reads, in one-letter code: Putative dipeptidase CPSG_01350 (461 aa).

Residues 1–10 (MSARDNEKGS) are compositionally biased toward basic and acidic residues. The tract at residues 1–31 (MSARDNEKGSARSQPSHAAASEIENVPRPSR) is disordered. The helical transmembrane segment at 35–52 (WTGTMIKVFIICACAGIV) threads the bilayer. The Zn(2+) site is built by His-90, Asp-92, and Glu-203. Residues Cys-142 and Cys-232 are joined by a disulfide bond. His-230 serves as a coordination point for substrate. The Zn(2+) site is built by His-274 and His-295. The substrate site is built by Arg-306 and Asp-366. N-linked (GlcNAc...) asparagine glycosylation is present at Asn-379.

This sequence belongs to the metallo-dependent hydrolases superfamily. Peptidase M19 family. The cofactor is Zn(2+).

The protein localises to the membrane. It catalyses the reaction an L-aminoacyl-L-amino acid + H2O = 2 an L-alpha-amino acid. Functionally, hydrolyzes a wide range of dipeptides. This Coccidioides posadasii (strain RMSCC 757 / Silveira) (Valley fever fungus) protein is Putative dipeptidase CPSG_01350.